The chain runs to 561 residues: MNCLATTIIITCKPTLISDMAVAIDPFSDKFPYFNRSSQRCRLQSLTNLDFNFLAQSFNHTFEDDNIHRSVSSPCFSIAASANMEEDLKATTAPRIEILGGQRVPTVRALVAEVTMAMVSGAQPLLLPSGMGGAYLLQTGKGHNIAVAKPVDEEPLAFNNPKKSGNLMLGQPGMKHSIPVGETGIRELAAYLLDYQGFSGVPPTALVSISHVPFHVSDAFSFSSMPYKVASLQRFVGHDFDAGELGPGSFTATSVHRIGILDVRLLNLDRHAGNMLVKRCDKKEAYNRLGTAELVPIDHGLCLPECLDDPYFEWLNWPQALVPFSDTELDYISNLDPFKDAELLRTELHSLPESAIRVLVVCTVFLKQAAAAGLCLAEIGEKMTRDFSKGEESFSLLETLCTKAKASVFGKTSEDSDYSHEGNEVNTELQCGMFKFDGGDTPCEAEISEVFHVSKPPLVPRGPRANTIPNDVTASMSSSQNQRITHQEKSAKEKKRGGKQERCTVRSKSPPISPNHDESKGVSFVDMTTVEWDTFLQSFQTLLQDALSKGSTPRLGCSCEI.

In terms of domain architecture, PI3K/PI4K catalytic spans 121 to 416 (GAQPLLLPSG…SVFGKTSEDS (296 aa)). A G-loop region spans residues 127–133 (LPSGMGG). ATP is bound by residues 128 to 134 (PSGMGGA), Lys149, and 233 to 236 (QRFV). The catalytic loop stretch occupies residues 266-274 (LNLDRHAGN). Residues 296–322 (PIDHGLCLPECLDDPYFEWLNWPQALV) are activation loop. Asp298 is a binding site for ATP. Residues 456–520 (PPLVPRGPRA…PISPNHDESK (65 aa)) form a disordered region. A compositionally biased stretch (polar residues) spans 467–484 (TIPNDVTASMSSSQNQRI).

This sequence belongs to the PI3/PI4-kinase family. Type II PI4K subfamily.

It catalyses the reaction a 1,2-diacyl-sn-glycero-3-phospho-(1D-myo-inositol) + ATP = a 1,2-diacyl-sn-glycero-3-phospho-(1D-myo-inositol 4-phosphate) + ADP + H(+). In terms of biological role, the phosphorylation of phosphatidylinositol (PI) to PI4P is the first committed step in the generation of phosphatidylinositol 4,5-bisphosphate (PIP2), a precursor of the second messenger inositol 1,4,5-trisphosphate (InsP3). In Arabidopsis thaliana (Mouse-ear cress), this protein is Phosphatidylinositol 4-kinase gamma 1 (PI4KG1).